The chain runs to 259 residues: Protoheme IX farnesyltransferase (259 aa).

Helical transmembrane passes span 15–35 (LICLTALLLAAAAAAMINGVL), 61–81 (ATVAAAGMLFAALALSITFLP), 83–103 (LTTALILLAIFSYTPLYTLWF), 109–129 (WGVVPGGIPGALPVLVGASAV), 137–157 (PLILFLVMLLWQPPHFWALAL), 182–202 (VCIFVFAALLLPASLALWFTG), 208–228 (FAIEALCLGFFNLFSCYLYLV), and 236–256 (AFQASIFYLLGLLSAVIIDIC).

Belongs to the UbiA prenyltransferase family. Protoheme IX farnesyltransferase subfamily.

Its subcellular location is the cell inner membrane. The catalysed reaction is heme b + (2E,6E)-farnesyl diphosphate + H2O = Fe(II)-heme o + diphosphate. Its pathway is porphyrin-containing compound metabolism; heme O biosynthesis; heme O from protoheme: step 1/1. Converts heme B (protoheme IX) to heme O by substitution of the vinyl group on carbon 2 of heme B porphyrin ring with a hydroxyethyl farnesyl side group. This chain is Protoheme IX farnesyltransferase, found in Geotalea uraniireducens (strain Rf4) (Geobacter uraniireducens).